The primary structure comprises 261 residues: Kallikrein 1-related peptidase b11 (261 aa).

The first 18 residues, 1-18, serve as a signal peptide directing secretion; the sequence is MWFLILFLALSLGGIDAA. Positions 19 to 24 are cleaved as a propeptide — activation peptide; sequence PPVQSR. The Peptidase S1 domain occupies 25–258; the sequence is IVGGFNCEKN…FTNWIKDTMA (234 aa). Cystine bridges form between Cys-31–Cys-173, Cys-50–Cys-66, Cys-152–Cys-219, Cys-184–Cys-198, and Cys-209–Cys-234. The active-site Charge relay system is the His-65. An N-linked (GlcNAc...) asparagine glycan is attached at Asn-102. Catalysis depends on Asp-120, which acts as the Charge relay system. The active-site Charge relay system is Ser-213.

This sequence belongs to the peptidase S1 family. Kallikrein subfamily.

The enzyme catalyses Preferential cleavage of Arg-|-Xaa bonds in small molecule substrates. Highly selective action to release kallidin (lysyl-bradykinin) from kininogen involves hydrolysis of Met-|-Xaa or Leu-|-Xaa.. Its function is as follows. Glandular kallikreins cleave Met-Lys and Arg-Ser bonds in kininogen to release Lys-bradykinin. The chain is Kallikrein 1-related peptidase b11 (Klk1b11) from Mus musculus (Mouse).